The chain runs to 81 residues: Cytotoxin 3 (81 aa).

The first 21 residues, 1–21 (MKTLLLTLVVVTIVCLDLGYT), serve as a signal peptide directing secretion. 4 disulfide bridges follow: Cys-24–Cys-42, Cys-35–Cys-59, Cys-63–Cys-74, and Cys-75–Cys-80.

This sequence belongs to the three-finger toxin family. Short-chain subfamily. Type IA cytotoxin sub-subfamily. In terms of assembly, monomer in solution; Homodimer and oligomer in the presence of negatively charged lipids forming a pore with a size ranging between 20 and 30 Angstroms. Interacts with Kv channel-interacting protein 1 (KCNIP1) in a calcium-independent manner. In terms of tissue distribution, expressed by the venom gland.

Its subcellular location is the secreted. It is found in the target cell membrane. Basic protein that binds to cell membrane and depolarizes cardiomyocytes. This cytotoxin also possesses lytic activity on many other cells, including red blood cells. Interaction with sulfatides in the cell membrane induces pore formation and cell internalization. Cytotoxicity is due to pore formation, and to another mechanism independent of membrane-damaging activity. When internalized, it targets the mitochondrial membrane and induces mitochondrial swelling and fragmentation. It inhibits protein kinases C. It binds to the integrin alpha-V/beta-3 (ITGAV/ITGB3) with a moderate affinity. It also binds with high affinity to heparin. This chain is Cytotoxin 3, found in Naja atra (Chinese cobra).